The chain runs to 216 residues: Probable flavin-dependent thymidylate synthase (216 aa).

One can recognise a ThyX domain in the interval 1 to 216; that stretch reads MSAKLISVTK…PSIAKALDWV (216 aa). Residues S55, 78 to 80, and E86 each bind FAD; that span reads RHR. DUMP-binding positions include 75–78, 86–90, and R155; these read QVLR and EFSQR. The short motif at 78–88 is the ThyX motif element; sequence RHRSFHFQEFS. H177 provides a ligand contact to FAD. A dUMP-binding site is contributed by R182. The active-site Involved in ionization of N3 of dUMP, leading to its activation is the R182.

Belongs to the thymidylate synthase ThyX family. As to quaternary structure, homotetramer. It depends on FAD as a cofactor.

It carries out the reaction dUMP + (6R)-5,10-methylene-5,6,7,8-tetrahydrofolate + NADPH + H(+) = dTMP + (6S)-5,6,7,8-tetrahydrofolate + NADP(+). It functions in the pathway pyrimidine metabolism; dTTP biosynthesis. Functionally, catalyzes the reductive methylation of 2'-deoxyuridine-5'-monophosphate (dUMP) to 2'-deoxythymidine-5'-monophosphate (dTMP) while utilizing 5,10-methylenetetrahydrofolate (mTHF) as the methyl donor, and NADPH and FADH(2) as the reductant. The sequence is that of Probable flavin-dependent thymidylate synthase from Paramecium bursaria Chlorella virus 1 (PBCV-1).